Reading from the N-terminus, the 195-residue chain is Pyridoxal 5'-phosphate synthase subunit PdxT (195 aa).

49 to 51 (GES) lines the L-glutamine pocket. Cysteine 81 acts as the Nucleophile in catalysis. Residues arginine 113 and 141–142 (IR) contribute to the L-glutamine site. Active-site charge relay system residues include histidine 177 and glutamate 179.

Belongs to the glutaminase PdxT/SNO family. As to quaternary structure, in the presence of PdxS, forms a dodecamer of heterodimers. Only shows activity in the heterodimer.

It catalyses the reaction aldehydo-D-ribose 5-phosphate + D-glyceraldehyde 3-phosphate + L-glutamine = pyridoxal 5'-phosphate + L-glutamate + phosphate + 3 H2O + H(+). The catalysed reaction is L-glutamine + H2O = L-glutamate + NH4(+). Its pathway is cofactor biosynthesis; pyridoxal 5'-phosphate biosynthesis. Functionally, catalyzes the hydrolysis of glutamine to glutamate and ammonia as part of the biosynthesis of pyridoxal 5'-phosphate. The resulting ammonia molecule is channeled to the active site of PdxS. The chain is Pyridoxal 5'-phosphate synthase subunit PdxT from Mycolicibacterium vanbaalenii (strain DSM 7251 / JCM 13017 / BCRC 16820 / KCTC 9966 / NRRL B-24157 / PYR-1) (Mycobacterium vanbaalenii).